An 84-amino-acid chain; its full sequence is Exodeoxyribonuclease 7 small subunit (84 aa).

The disordered stretch occupies residues 65 to 84 (QEGDWTTSPFEPASGEPPGG).

This sequence belongs to the XseB family. As to quaternary structure, heterooligomer composed of large and small subunits.

The protein resides in the cytoplasm. It catalyses the reaction Exonucleolytic cleavage in either 5'- to 3'- or 3'- to 5'-direction to yield nucleoside 5'-phosphates.. Bidirectionally degrades single-stranded DNA into large acid-insoluble oligonucleotides, which are then degraded further into small acid-soluble oligonucleotides. The chain is Exodeoxyribonuclease 7 small subunit from Syntrophobacter fumaroxidans (strain DSM 10017 / MPOB).